Reading from the N-terminus, the 903-residue chain is FIGNL1-interacting regulator of recombination and mitosis (903 aa).

Phosphoserine is present on residues Ser101 and Ser795. Lys843 is subject to N6-acetyllysine.

In terms of assembly, interacts (via its N-terminal region) with PLK1; controls PLK1 kinase activity. Interacts (via the KVVXF motif) with PPP1CC; controls PLK1 kinase activity. Interacts with FIGNL1; may regulate homologous recombination. Phosphorylation at Ser-101 by PLK1 strengthens FIRRM-PLK1 interaction. Phosphorylation at Ser-795 by PLK1 negatively regulates its interaction with PPP1CC.

It is found in the chromosome. It localises to the centromere. The protein localises to the kinetochore. The protein resides in the nucleus. Its subcellular location is the midbody. It is found in the cytoplasm. It localises to the cytoskeleton. The protein localises to the spindle. Regulates PLK1 kinase activity at kinetochores and promotes faithful chromosome segregation in prometaphase by bridging kinase and phosphatase activities. Phosphorylation of FIRRM by PLK1 negatively regulates its interaction with the phosphatase, PPP1CC, thus creating a negative feedback loop for maintaining proper PLK1 kinase activity during mitosis. In complex with FIGL1 may regulate homologous recombination. The protein is FIGNL1-interacting regulator of recombination and mitosis of Mus musculus (Mouse).